The primary structure comprises 256 residues: Type III pantothenate kinase (256 aa).

6–13 (DVGNTNIV) contributes to the ATP binding site. Position 107–110 (107–110 (GADR)) interacts with substrate. Asp109 acts as the Proton acceptor in catalysis. K(+) is bound at residue Asp129. Thr132 contributes to the ATP binding site. Residue Thr184 participates in substrate binding.

It belongs to the type III pantothenate kinase family. As to quaternary structure, homodimer. Requires NH4(+) as cofactor. K(+) is required as a cofactor.

It localises to the cytoplasm. It carries out the reaction (R)-pantothenate + ATP = (R)-4'-phosphopantothenate + ADP + H(+). It participates in cofactor biosynthesis; coenzyme A biosynthesis; CoA from (R)-pantothenate: step 1/5. In terms of biological role, catalyzes the phosphorylation of pantothenate (Pan), the first step in CoA biosynthesis. This Pelotomaculum thermopropionicum (strain DSM 13744 / JCM 10971 / SI) protein is Type III pantothenate kinase.